An 89-amino-acid chain; its full sequence is Small ribosomal subunit protein uS15 (89 aa).

The protein belongs to the universal ribosomal protein uS15 family. Part of the 30S ribosomal subunit. Forms a bridge to the 50S subunit in the 70S ribosome, contacting the 23S rRNA.

Its function is as follows. One of the primary rRNA binding proteins, it binds directly to 16S rRNA where it helps nucleate assembly of the platform of the 30S subunit by binding and bridging several RNA helices of the 16S rRNA. Functionally, forms an intersubunit bridge (bridge B4) with the 23S rRNA of the 50S subunit in the ribosome. In Syntrophobacter fumaroxidans (strain DSM 10017 / MPOB), this protein is Small ribosomal subunit protein uS15.